Here is a 509-residue protein sequence, read N- to C-terminus: ATP synthase subunit alpha (509 aa).

169-176 (GDRQTGKT) is a binding site for ATP.

Belongs to the ATPase alpha/beta chains family. F-type ATPases have 2 components, CF(1) - the catalytic core - and CF(0) - the membrane proton channel. CF(1) has five subunits: alpha(3), beta(3), gamma(1), delta(1), epsilon(1). CF(0) has three main subunits: a(1), b(2) and c(9-12). The alpha and beta chains form an alternating ring which encloses part of the gamma chain. CF(1) is attached to CF(0) by a central stalk formed by the gamma and epsilon chains, while a peripheral stalk is formed by the delta and b chains.

It is found in the cell inner membrane. It catalyses the reaction ATP + H2O + 4 H(+)(in) = ADP + phosphate + 5 H(+)(out). Produces ATP from ADP in the presence of a proton gradient across the membrane. The alpha chain is a regulatory subunit. In Brucella ovis (strain ATCC 25840 / 63/290 / NCTC 10512), this protein is ATP synthase subunit alpha.